Reading from the N-terminus, the 467-residue chain is Glycogen synthase kinase-3 (467 aa).

The span at 1-20 (MSSKDQILEKDKKETDDNGN) shows a compositional bias: basic and acidic residues. Residues 1 to 42 (MSSKDQILEKDKKETDDNGNKKTTTTTSSSSSSSSSSKPRSN) are disordered. Over residues 23-37 (TTTTTSSSSSSSSSS) the composition is skewed to low complexity. The region spanning 56–339 (YITEGVIGNG…PVEICAHPFF (284 aa)) is the Protein kinase domain. Residues 62–70 (IGNGSFGVV) and K85 contribute to the ATP site. D179 serves as the catalytic Proton acceptor. Phosphotyrosine; by zakA is present on residues Y214 and Y220. The interval 400 to 467 (SSNQSSSSNS…TTTTTTTSNH (68 aa)) is disordered.

The protein belongs to the protein kinase superfamily. CMGC Ser/Thr protein kinase family. GSK-3 subfamily. Requires Mg(2+) as cofactor.

The catalysed reaction is L-seryl-[tau protein] + ATP = O-phospho-L-seryl-[tau protein] + ADP + H(+). The enzyme catalyses L-threonyl-[tau protein] + ATP = O-phospho-L-threonyl-[tau protein] + ADP + H(+). With respect to regulation, inhibited by lithium. Lithium inhibition is competitive with respect to magnesium but non-competitive with respect to the peptide substrate. During cellular differentiation, may mediate an extracellular cyclic AMP stimulated signal transduction pathway that regulates prespore and prestalk B-cell proportions through inhibition of stalk cell formation and induction of prespore cell differentiation. The cAMP receptor carC appears to activate gskA via the tyrosine kinases zakA and zak2, to stimulate prespore differentiation, while carD appears to negatively regulate gskA, to promote prestalk formation. This Dictyostelium discoideum (Social amoeba) protein is Glycogen synthase kinase-3 (gskA).